The sequence spans 195 residues: Molybdenum cofactor guanylyltransferase (195 aa).

GTP-binding positions include 10 to 12, lysine 23, asparagine 51, aspartate 69, and aspartate 99; that span reads LAG. Aspartate 99 lines the Mg(2+) pocket.

This sequence belongs to the MobA family. Monomer. The cofactor is Mg(2+).

It is found in the cytoplasm. It catalyses the reaction Mo-molybdopterin + GTP + H(+) = Mo-molybdopterin guanine dinucleotide + diphosphate. Its function is as follows. Transfers a GMP moiety from GTP to Mo-molybdopterin (Mo-MPT) cofactor (Moco or molybdenum cofactor) to form Mo-molybdopterin guanine dinucleotide (Mo-MGD) cofactor. The protein is Molybdenum cofactor guanylyltransferase of Histophilus somni (strain 129Pt) (Haemophilus somnus).